The chain runs to 313 residues: Urease accessory protein UreD (313 aa).

The disordered stretch occupies residues M1–D30. Residues E15–G26 show a composition bias toward gly residues.

Belongs to the UreD family. As to quaternary structure, ureD, UreF and UreG form a complex that acts as a GTP-hydrolysis-dependent molecular chaperone, activating the urease apoprotein by helping to assemble the nickel containing metallocenter of UreC. The UreE protein probably delivers the nickel.

It is found in the cytoplasm. Required for maturation of urease via the functional incorporation of the urease nickel metallocenter. In Chromohalobacter salexigens (strain ATCC BAA-138 / DSM 3043 / CIP 106854 / NCIMB 13768 / 1H11), this protein is Urease accessory protein UreD.